Here is a 440-residue protein sequence, read N- to C-terminus: Translation initiation factor eIF2B subunit gamma (440 aa).

The protein belongs to the eIF-2B gamma/epsilon subunits family. Component of the translation initiation factor 2B (eIF2B) complex which is a heterodecamer of two sets of five different subunits: alpha, beta, gamma, delta and epsilon. Subunits alpha, beta and delta comprise a regulatory subcomplex and subunits epsilon and gamma comprise a catalytic subcomplex. Within the complex, the hexameric regulatory complex resides at the center, with the two heterodimeric catalytic subcomplexes bound on opposite sides.

It is found in the cytoplasm. The protein resides in the cytosol. Functionally, acts as a component of the translation initiation factor 2B (eIF2B) complex, which catalyzes the exchange of GDP for GTP on the eukaryotic initiation factor 2 (eIF2) complex gamma subunit. Its guanine nucleotide exchange factor activity is repressed when bound to eIF2 complex phosphorylated on the alpha subunit, thereby limiting the amount of methionyl-initiator methionine tRNA available to the ribosome and consequently global translation is repressed. This chain is Translation initiation factor eIF2B subunit gamma (eif2b3), found in Dictyostelium discoideum (Social amoeba).